Consider the following 518-residue polypeptide: ATP synthase subunit alpha (518 aa).

Residue 170–177 (GDRQTGKT) participates in ATP binding.

The protein belongs to the ATPase alpha/beta chains family. As to quaternary structure, F-type ATPases have 2 components, CF(1) - the catalytic core - and CF(0) - the membrane proton channel. CF(1) has five subunits: alpha(3), beta(3), gamma(1), delta(1), epsilon(1). CF(0) has three main subunits: a(1), b(2) and c(9-12). The alpha and beta chains form an alternating ring which encloses part of the gamma chain. CF(1) is attached to CF(0) by a central stalk formed by the gamma and epsilon chains, while a peripheral stalk is formed by the delta and b chains.

The protein resides in the cell membrane. The catalysed reaction is ATP + H2O + 4 H(+)(in) = ADP + phosphate + 5 H(+)(out). Functionally, produces ATP from ADP in the presence of a proton gradient across the membrane. The alpha chain is a regulatory subunit. The polypeptide is ATP synthase subunit alpha (Mycoplasmoides gallisepticum (strain R(low / passage 15 / clone 2)) (Mycoplasma gallisepticum)).